A 396-amino-acid polypeptide reads, in one-letter code: Phosphoglycerate kinase (396 aa).

Substrate-binding positions include 21–23 (DFN), Arg-37, 60–63 (HLGR), Arg-121, and Arg-154. ATP contacts are provided by residues Lys-205, Gly-296, Glu-327, and 353-356 (GGDS).

This sequence belongs to the phosphoglycerate kinase family. In terms of assembly, monomer.

Its subcellular location is the cytoplasm. It carries out the reaction (2R)-3-phosphoglycerate + ATP = (2R)-3-phospho-glyceroyl phosphate + ADP. It functions in the pathway carbohydrate degradation; glycolysis; pyruvate from D-glyceraldehyde 3-phosphate: step 2/5. This chain is Phosphoglycerate kinase, found in Anaeromyxobacter dehalogenans (strain 2CP-1 / ATCC BAA-258).